Here is a 237-residue protein sequence, read N- to C-terminus: tRNA(His) guanylyltransferase (237 aa).

The residue at position 2 (alanine 2) is an N-acetylalanine. Aspartate 29 and glycine 30 together coordinate Mg(2+). Lysine 32, phenylalanine 33, histidine 34, lysine 44, and aspartate 47 together coordinate GTP. A Mg(2+)-binding site is contributed by aspartate 77.

It belongs to the tRNA(His) guanylyltransferase family. As to quaternary structure, homotetramer. It depends on Mg(2+) as a cofactor.

It carries out the reaction a 5'-end ribonucleotide-tRNA(His) + GTP + ATP + H2O = a 5'-end phospho-guanosine-ribonucleotide-tRNA(His) + AMP + 2 diphosphate + H(+). The enzyme catalyses a 5'-end ribonucleotide-RNA + a ribonucleoside 5'-triphosphate + ATP + H2O = a 5'-end phospho-ribonucleoside-ribonucleotide-RNA + AMP + 2 diphosphate + H(+). In terms of biological role, acts as a tRNA(His) guanylyltransferase that catalyzes 3'-5' addition of a single guanosine residue to the -1 position of tRNA(His), to form a non-Watson-Crick G(-1):A-73 base pair. After addition of G(-1), THG1 removes pyrophosphate from the tRNA 5'-end, generating 5'-monophosphorylated G(-1)-containing tRNA which is important for recognition of tRNA(His) by its cognate histidyl-tRNA synthetase. In addition to the single-G(-1) addition reaction, THG1 polymerizes multiple G residues to the 5'-end of tRNA(His) variants using the 3'-end of the tRNA(His) acceptor stem as a template. The protein is tRNA(His) guanylyltransferase of Saccharomyces cerevisiae (strain ATCC 204508 / S288c) (Baker's yeast).